The primary structure comprises 948 residues: MLGRLAVRQAVRCSKASIKPVNTHQLCLRNFSAIRRLSFVAGAQCRPYHTTANMLHRTARGEHGMAACGNPSAAVKFERLPTFAEPTHYNVRLSPCLNQFSFDGHATIDVTIKEATDVLKVHAQSLLIQSVSLITQPGDASKSLETSYDDKLNILTIKLPTTMQPQKVQLDFKFVGELNDKMRGFYRSQYKDKNGTEKFLASTQFESTYARYAFPCFDEPIYKATFDVTLEVENHLTALSNMNVISETPTADGKRKAVTFATSPKMSSYLVAFAVGELEYISAQTKSGVEMRVYTVPGKKEQGQYSLDLSVKCIDWYNEWFDIKYPLPKCDLIAIPDFSMGAMENWGLVTYREIALLVDPGVTSTRQKSRVALVVAHELAHLWFGNLVTMKWWTDLWLKEGFASFMEYMFVGANCPEFKIWLHFLNDELASGMGLDALRNSHPIEVEIDNPNELDEIYDSITYAKSNSVNRMLCYYLSEPVFQKGLRLYLKRFQYSNAVTQDLWTALSEASGQNVNELMSGWTQQMGFPVLKVSQRQDGNNRILTVEQRRFISDGGEDPKNSQWQVPITVAVGSSPSDVKARFLLKEKQQEFTIEGVAPGEWVKLNSGTTGFYRVEYSDEMLTAMLPDIASRRMPVLDRFGLINDLSALLNTGRVSIAQFVQVAASSAKEDEYVVWGAIDEGMSKLLACAREMSEDTLKSAKQLVVKMFEQTGAELGFAEQAGEDSQKMMLRSLVQARLARAGHQPTIDKFTQMFNDFLEKGTPIHPDIRLATFGVVARYGGKEGFDKLMNLRETTTFQEIERQTMVAMSQTPEESLLAQLFEYGFEKNKVRPQDQLYLFLGTGATHMGQQYAWKYFCEHIKEFLDKYGGANSSLFQRCLKFAGESFGNEKRAVEFQDFFCNCNVLSDTDRQTLARPIGQTVEAIRLNARLLESNRQIIENLLKQSNV.

Substrate contacts are provided by residues glutamate 206 and 341–345; that span reads GAMEN. Histidine 377 lines the Zn(2+) pocket. Glutamate 378 (proton acceptor) is an active-site residue. Zn(2+)-binding residues include histidine 381 and glutamate 400.

This sequence belongs to the peptidase M1 family. The cofactor is Zn(2+). In terms of tissue distribution, expressed mainly in intestinal cells in the posterior part of the intestine and in amphid sensory neurons and nerve ring neurons. Expressed in neurons in the male tail. Expressed in mature spermatids (at protein level).

The protein resides in the cytoplasm. The protein localises to the cell cortex. It is found in the chromosome. Its subcellular location is the cytoskeleton. It localises to the spindle pole. It catalyses the reaction Release of an N-terminal amino acid, preferentially alanine, from a wide range of peptides, amides and arylamides.. Inhibited by chelating agent 1,10-phenanthroline, aminopeptidase inhibitors actinonin, amastatin, and leuhistin, and to a lesser extent by puromycin. Its function is as follows. Aminopeptidase. Required for the exit from meiosis, probably upstream of cyclin cyb-3. Involved in the establishment of the anterior-posterior polarity at the embryonic 1-cell stage by regulating the dynamics of sperm-donated centrosomes. Plays a role in oocyte maturation. Required for embryonic development. The polypeptide is Puromycin-sensitive aminopeptidase (Caenorhabditis elegans).